A 98-amino-acid polypeptide reads, in one-letter code: Ribonuclease kappa (98 aa).

The next 2 membrane-spanning stretches (helical) occupy residues 13-33 and 65-85; these read ACGIVLSAWGVIMLIMLGIFF and VSYNCFIAAGLYLLLGGFSFC.

It belongs to the RNase K family. As to quaternary structure, interacts with the proton translocation complex V0 of the V-ATPase. Interacts with ATP6AP1.

Its subcellular location is the endomembrane system. It localises to the cytoplasmic vesicle. The protein localises to the clathrin-coated vesicle membrane. In terms of biological role, endoribonuclease which preferentially cleaves ApU and ApG phosphodiester bonds. Hydrolyzes UpU bonds at a lower rate. Regulates the activity of vacuolar (H+)-ATPase (V-ATPase) which is responsible for acidifying and maintaining the pH of intracellular compartments. Required at an early stage of receptor-mediated endocytosis. The chain is Ribonuclease kappa (Rnasek) from Mus musculus (Mouse).